Reading from the N-terminus, the 466-residue chain is Asparagine--tRNA ligase (466 aa).

It belongs to the class-II aminoacyl-tRNA synthetase family. Homodimer.

Its subcellular location is the cytoplasm. It catalyses the reaction tRNA(Asn) + L-asparagine + ATP = L-asparaginyl-tRNA(Asn) + AMP + diphosphate + H(+). The protein is Asparagine--tRNA ligase of Shewanella baltica (strain OS185).